The sequence spans 179 residues: Inosine/xanthosine triphosphatase (179 aa).

A Mg(2+)-binding site is contributed by Glu71. 71-72 (EA) lines the substrate pocket.

Belongs to the YjjX NTPase family. In terms of assembly, homodimer. It depends on Mg(2+) as a cofactor. Requires Mn(2+) as cofactor.

The enzyme catalyses XTP + H2O = XDP + phosphate + H(+). It catalyses the reaction ITP + H2O = IDP + phosphate + H(+). Functionally, phosphatase that hydrolyzes non-canonical purine nucleotides such as XTP and ITP to their respective diphosphate derivatives. Probably excludes non-canonical purines from DNA/RNA precursor pool, thus preventing their incorporation into DNA/RNA and avoiding chromosomal lesions. This Shewanella sp. (strain MR-7) protein is Inosine/xanthosine triphosphatase.